Here is a 338-residue protein sequence, read N- to C-terminus: MTPTDAKRPLQLNDQGQLRHFLSLDGLPRELLTEILDTADSFLEVGARAVKKVPLLRGKTVCNVFFENSTRTRTTFELAAKRLSADVITLNVSTSSTSKGETLTDTLRNLEAMAADMFVVRHADSGAAHFIAEHVSPDVAVINGGDGRHAHPTQGMLDMLTIRRHKGSFDNLSVAIVGDILHSRVARSNMLALRTLGCPDIRVIAPKTLLPEGIEQYGVRVFTDMNEGLRDVDVVIMLRLQRERMQGGLLPSEGEFYKLYGLTTQRLALARPDAIVMHPGPINRGVEIESAVADGPQSVILNQVTYGIAIRMAVLSMAMSGQTAQRQIDSESVSEEQQ.

The carbamoyl phosphate site is built by arginine 71 and threonine 72. Lysine 99 contributes to the L-aspartate binding site. Carbamoyl phosphate-binding residues include arginine 121, histidine 151, and glutamine 154. The L-aspartate site is built by arginine 184 and arginine 239. Carbamoyl phosphate is bound by residues glycine 280 and proline 281.

It belongs to the aspartate/ornithine carbamoyltransferase superfamily. ATCase family. Heterododecamer (2C3:3R2) of six catalytic PyrB chains organized as two trimers (C3), and six regulatory PyrI chains organized as three dimers (R2).

It carries out the reaction carbamoyl phosphate + L-aspartate = N-carbamoyl-L-aspartate + phosphate + H(+). The protein operates within pyrimidine metabolism; UMP biosynthesis via de novo pathway; (S)-dihydroorotate from bicarbonate: step 2/3. Catalyzes the condensation of carbamoyl phosphate and aspartate to form carbamoyl aspartate and inorganic phosphate, the committed step in the de novo pyrimidine nucleotide biosynthesis pathway. This is Aspartate carbamoyltransferase catalytic subunit from Stutzerimonas stutzeri (strain A1501) (Pseudomonas stutzeri).